Reading from the N-terminus, the 1058-residue chain is Carbamoyl phosphate synthase large chain (1058 aa).

A carboxyphosphate synthetic domain region spans residues 1 to 401; sequence MPKRTDIQKI…SLLKACRSLE (401 aa). ATP is bound by residues R129, R169, G175, G176, R208, I210, E215, G241, I242, H243, Q284, and E298. The ATP-grasp 1 domain occupies 133-327; it reads KQLMEELEQP…IAKLAAKIAV (195 aa). The Mg(2+) site is built by Q284, E298, and N300. The Mn(2+) site is built by Q284, E298, and N300. The tract at residues 402–546 is oligomerization domain; the sequence is IGVHHNEIPE…YSTYGWENES (145 aa). The interval 547-929 is carbamoyl phosphate synthetic domain; the sequence is IRSDKESVLV…ALYKAFEASY (383 aa). Residues 671 to 861 form the ATP-grasp 2 domain; sequence EQALKELDIP…MAQVATKLIL (191 aa). ATP contacts are provided by R707, S746, I748, E752, G777, V778, H779, S780, Q820, and E832. Residues Q820, E832, and N834 each coordinate Mg(2+). Mn(2+)-binding residues include Q820, E832, and N834. The region spanning 930–1058 is the MGS-like domain; it reads LHLPTFGNVV…ESRSFVTEAI (129 aa). Residues 930–1058 form an allosteric domain region; sequence LHLPTFGNVV…ESRSFVTEAI (129 aa).

This sequence belongs to the CarB family. As to quaternary structure, composed of two chains; the small (or glutamine) chain promotes the hydrolysis of glutamine to ammonia, which is used by the large (or ammonia) chain to synthesize carbamoyl phosphate. Tetramer of heterodimers (alpha,beta)4. Requires Mg(2+) as cofactor. The cofactor is Mn(2+).

It carries out the reaction hydrogencarbonate + L-glutamine + 2 ATP + H2O = carbamoyl phosphate + L-glutamate + 2 ADP + phosphate + 2 H(+). It catalyses the reaction hydrogencarbonate + NH4(+) + 2 ATP = carbamoyl phosphate + 2 ADP + phosphate + 2 H(+). The protein operates within amino-acid biosynthesis; L-arginine biosynthesis; carbamoyl phosphate from bicarbonate: step 1/1. It participates in pyrimidine metabolism; UMP biosynthesis via de novo pathway; (S)-dihydroorotate from bicarbonate: step 1/3. Large subunit of the glutamine-dependent carbamoyl phosphate synthetase (CPSase). CPSase catalyzes the formation of carbamoyl phosphate from the ammonia moiety of glutamine, carbonate, and phosphate donated by ATP, constituting the first step of 2 biosynthetic pathways, one leading to arginine and/or urea and the other to pyrimidine nucleotides. The large subunit (synthetase) binds the substrates ammonia (free or transferred from glutamine from the small subunit), hydrogencarbonate and ATP and carries out an ATP-coupled ligase reaction, activating hydrogencarbonate by forming carboxy phosphate which reacts with ammonia to form carbamoyl phosphate. The polypeptide is Carbamoyl phosphate synthase large chain (Streptococcus pneumoniae (strain ATCC BAA-255 / R6)).